Consider the following 37-residue polypeptide: Cytochrome b6-f complex subunit 5 (37 aa).

Residues 5–25 (FLFGIVLGLIPITLAGLFVTA) traverse the membrane as a helical segment.

The protein belongs to the PetG family. In terms of assembly, the 4 large subunits of the cytochrome b6-f complex are cytochrome b6, subunit IV (17 kDa polypeptide, PetD), cytochrome f and the Rieske protein, while the 4 small subunits are PetG, PetL, PetM and PetN. The complex functions as a dimer.

The protein localises to the plastid. The protein resides in the chloroplast thylakoid membrane. Component of the cytochrome b6-f complex, which mediates electron transfer between photosystem II (PSII) and photosystem I (PSI), cyclic electron flow around PSI, and state transitions. PetG is required for either the stability or assembly of the cytochrome b6-f complex. The chain is Cytochrome b6-f complex subunit 5 from Solanum lycopersicum (Tomato).